We begin with the raw amino-acid sequence, 233 residues long: Snake venom serine protease BthaTL (233 aa).

The region spanning 1–224 (VIGGDECDIN…YLPWIQSIIA (224 aa)) is the Peptidase S1 domain. Cystine bridges form between Cys7–Cys138, Cys25–Cys41, Cys73–Cys231, Cys117–Cys185, Cys149–Cys164, and Cys175–Cys200. Catalysis depends on charge relay system residues His40 and Asp85. Residue Ser179 is the Charge relay system of the active site.

This sequence belongs to the peptidase S1 family. Snake venom subfamily. As to quaternary structure, monomer. As to expression, expressed by the venom gland.

It localises to the secreted. Snake venom serine protease that may act in the hemostasis system of the prey. This Bothrops alternatus (Urutu) protein is Snake venom serine protease BthaTL.